The chain runs to 399 residues: Putative 8-amino-7-oxononanoate synthase (399 aa).

R23 serves as a coordination point for substrate. 110–111 is a pyridoxal 5'-phosphate binding site; that stretch reads GY. Residue H135 coordinates substrate. Residues S183, 208 to 211, and 239 to 242 contribute to the pyridoxal 5'-phosphate site; these read DEAH and TLSK. At K242 the chain carries N6-(pyridoxal phosphate)lysine. Position 364 (T364) interacts with substrate.

The protein belongs to the class-II pyridoxal-phosphate-dependent aminotransferase family. BioF subfamily. As to quaternary structure, homodimer. The cofactor is pyridoxal 5'-phosphate.

The catalysed reaction is 6-carboxyhexanoyl-[ACP] + L-alanine + H(+) = (8S)-8-amino-7-oxononanoate + holo-[ACP] + CO2. It participates in cofactor biosynthesis; biotin biosynthesis. Its function is as follows. Catalyzes the decarboxylative condensation of pimeloyl-[acyl-carrier protein] and L-alanine to produce 8-amino-7-oxononanoate (AON), [acyl-carrier protein], and carbon dioxide. The polypeptide is Putative 8-amino-7-oxononanoate synthase (bioF) (Cyanothece sp. (strain PCC 7425 / ATCC 29141)).